We begin with the raw amino-acid sequence, 60 residues long: OPG024 protein (60 aa).

The tract at residues 1 to 60 is disordered; it reads MSSKGGSSGGMWSVFIHGHDGSNKGSKTYTSGGGGMWGGGSSSGVKSGVNGGVKSGTGKI. Gly residues-rich tracts occupy residues 31-42 and 49-60; these read SGGGGMWGGGSS and VNGGVKSGTGKI.

It belongs to the orthopoxvirus OPG024 family.

This chain is OPG024 protein (OPG024), found in Vaccinia virus (strain Western Reserve) (VACV).